The chain runs to 962 residues: Insulin-degrading enzyme homolog (962 aa).

Over residues 1 to 10 (MVANEQQQQQ) the composition is skewed to low complexity. The segment at 1 to 21 (MVANEQQQQQQEEERKEVKLI) is disordered. Residue His-74 coordinates Zn(2+). The active-site Proton acceptor is the Glu-77. Positions 78 and 155 each coordinate Zn(2+).

Belongs to the peptidase M16 family. As to quaternary structure, homodimer. Requires Zn(2+) as cofactor.

It localises to the cytoplasm. In Dictyostelium discoideum (Social amoeba), this protein is Insulin-degrading enzyme homolog.